Here is a 145-residue protein sequence, read N- to C-terminus: uncharacterized protein (145 aa).

Substrate-binding residues include Val-97 and Asn-121.

It belongs to the D-isomer specific 2-hydroxyacid dehydrogenase family. FDH subfamily.

This is an uncharacterized protein from Saccharomyces cerevisiae (strain ATCC 204508 / S288c) (Baker's yeast).